A 321-amino-acid chain; its full sequence is Lipoyl synthase (321 aa).

[4Fe-4S] cluster contacts are provided by Cys-68, Cys-73, Cys-79, Cys-94, Cys-98, Cys-101, and Ser-308. Residues Phe-80 to Thr-297 enclose the Radical SAM core domain.

This sequence belongs to the radical SAM superfamily. Lipoyl synthase family. [4Fe-4S] cluster serves as cofactor.

Its subcellular location is the cytoplasm. The catalysed reaction is [[Fe-S] cluster scaffold protein carrying a second [4Fe-4S](2+) cluster] + N(6)-octanoyl-L-lysyl-[protein] + 2 oxidized [2Fe-2S]-[ferredoxin] + 2 S-adenosyl-L-methionine + 4 H(+) = [[Fe-S] cluster scaffold protein] + N(6)-[(R)-dihydrolipoyl]-L-lysyl-[protein] + 4 Fe(3+) + 2 hydrogen sulfide + 2 5'-deoxyadenosine + 2 L-methionine + 2 reduced [2Fe-2S]-[ferredoxin]. It functions in the pathway protein modification; protein lipoylation via endogenous pathway; protein N(6)-(lipoyl)lysine from octanoyl-[acyl-carrier-protein]: step 2/2. Functionally, catalyzes the radical-mediated insertion of two sulfur atoms into the C-6 and C-8 positions of the octanoyl moiety bound to the lipoyl domains of lipoate-dependent enzymes, thereby converting the octanoylated domains into lipoylated derivatives. In Shewanella baltica (strain OS223), this protein is Lipoyl synthase.